A 128-amino-acid chain; its full sequence is Large ribosomal subunit protein mL51 (128 aa).

The transit peptide at Met1–Leu31 directs the protein to the mitochondrion.

This sequence belongs to the mitochondrion-specific ribosomal protein mL51 family. As to quaternary structure, component of the mitochondrial ribosome large subunit (39S) which comprises a 16S rRNA and about 50 distinct proteins. Interacts with OXA1L.

It localises to the mitochondrion. This chain is Large ribosomal subunit protein mL51 (Mrpl51), found in Mus musculus (Mouse).